The following is a 416-amino-acid chain: Protein-lysine N-trimethyltransferase SMYD5 (416 aa).

Positions 21 to 351 (GSVEVRYVDS…PGEEICISYL (331 aa)) constitute an SET domain. The MYND-type zinc finger occupies 98–136 (PELCSVRKDLHQNCPHCQVMYCSAECRLAAAEQYHQILC). Position 350 (Tyr350) interacts with S-adenosyl-L-methionine. The interval 383–416 (EADDPNVTSEEEEEEDEEEGEPEDAELGDEMTDV) is disordered.

It belongs to the class V-like SAM-binding methyltransferase superfamily. In terms of assembly, interacts with the N-CoR complex. Interacts with EHMT2 and CBX5. Ubiquitinated and degradaed by the proteasome in response to mild hypothermia (32 degrees Celsius), relieving repression of the SP1 gene.

It localises to the cytoplasm. It catalyses the reaction L-lysyl-[protein] + 3 S-adenosyl-L-methionine = N(6),N(6),N(6)-trimethyl-L-lysyl-[protein] + 3 S-adenosyl-L-homocysteine + 3 H(+). The enzyme catalyses L-lysyl(20)-[histone H4] + 3 S-adenosyl-L-methionine = N(6),N(6),N(6)-trimethyl-L-lysyl(20)-[histone H4] + 3 S-adenosyl-L-homocysteine + 3 H(+). It carries out the reaction L-lysyl(36)-[histone H3] + 3 S-adenosyl-L-methionine = N(6),N(6),N(6)-trimethyl-L-lysyl(36)-[histone H3] + 3 S-adenosyl-L-homocysteine + 3 H(+). In terms of biological role, protein-lysine N-trimethyltransferase that specifically catalyzes trimethylation of 'Lys-22' of the RPL40/eL40 subunit of the 60S ribosome, thereby promoting translation elongation and protein synthesis. May also act as a histone methyltransferase in the context of histone octamers, but not on nucleosome substrates: trimethylates 'Lys-36' of histone H3 and 'Lys-20' of histone H4 to form H3K36me3 and H4K20me3, respectively. The histone methyltransferase activity, which is independent of its SET domain, is however unsure in vivo. In association with the NCoR corepressor complex, involved in the repression of toll-like receptor 4 (TLR4)-target inflammatory genes in macrophages, possibly by catalyzing the formation of H4K20me3 at the gene promoters. Plays an important role in embryonic stem (ES) cell self-renewal and differentiation. Maintains genome stability of ES cells during differentiation through regulation of heterochromatin formation and repression of endogenous repetitive DNA elements by promoting H4K20me3 marks. Acts as a regulator of the hypothermia response: its degradation in response to mild hypothermia relieves the formation of H3K36me3 at gene promoters, allowing expression of the neuroprotective gene SP1. The polypeptide is Protein-lysine N-trimethyltransferase SMYD5 (Mus musculus (Mouse)).